A 275-amino-acid polypeptide reads, in one-letter code: NH(3)-dependent NAD(+) synthetase (275 aa).

Residue 46–53 (GISGGQDS) participates in ATP binding. Aspartate 52 is a Mg(2+) binding site. Arginine 140 serves as a coordination point for deamido-NAD(+). Threonine 160 contacts ATP. Residue glutamate 165 participates in Mg(2+) binding. The deamido-NAD(+) site is built by lysine 173 and aspartate 180. 2 residues coordinate ATP: lysine 189 and threonine 211. 260–261 (HK) is a binding site for deamido-NAD(+).

The protein belongs to the NAD synthetase family. As to quaternary structure, homodimer.

The catalysed reaction is deamido-NAD(+) + NH4(+) + ATP = AMP + diphosphate + NAD(+) + H(+). It participates in cofactor biosynthesis; NAD(+) biosynthesis; NAD(+) from deamido-NAD(+) (ammonia route): step 1/1. In terms of biological role, catalyzes the ATP-dependent amidation of deamido-NAD to form NAD. Uses ammonia as a nitrogen source. This is NH(3)-dependent NAD(+) synthetase from Shigella flexneri serotype 5b (strain 8401).